Reading from the N-terminus, the 150-residue chain is Protein SprT-like (150 aa).

The SprT-like domain maps to 11-149 (ELVDKLSLTY…CGKCRGSLKE (139 aa)). Histidine 70 serves as a coordination point for Zn(2+). The active site involves glutamate 71. Histidine 74 contributes to the Zn(2+) binding site.

The protein belongs to the SprT family. Zn(2+) is required as a cofactor.

The protein resides in the cytoplasm. In Oceanobacillus iheyensis (strain DSM 14371 / CIP 107618 / JCM 11309 / KCTC 3954 / HTE831), this protein is Protein SprT-like.